A 359-amino-acid polypeptide reads, in one-letter code: Pyruvate dehydrogenase E1 component subunit beta, mitochondrial (359 aa).

A mitochondrion-targeting transit peptide spans 1 to 30; the sequence is MAAVAGLVRGPLRQASGLLKRRFHRSAPAA. Y67 carries the post-translational modification Phosphotyrosine. E89 is a thiamine diphosphate binding site. K(+) is bound by residues I142, A190, I191, D193, and N195. K354 is subject to N6-acetyllysine.

Heterotetramer of two PDHA1 and two PDHB subunits. The heterotetramer interacts with DLAT, and is part of the multimeric pyruvate dehydrogenase complex that contains multiple copies of pyruvate dehydrogenase (E1), dihydrolipoamide acetyltransferase (DLAT, E2) and lipoamide dehydrogenase (DLD, E3). These subunits are bound to an inner core composed of about 48 DLAT and 12 PDHX molecules. Interacts with DLAT. It depends on thiamine diphosphate as a cofactor.

Its subcellular location is the mitochondrion matrix. It carries out the reaction N(6)-[(R)-lipoyl]-L-lysyl-[protein] + pyruvate + H(+) = N(6)-[(R)-S(8)-acetyldihydrolipoyl]-L-lysyl-[protein] + CO2. The pyruvate dehydrogenase complex catalyzes the overall conversion of pyruvate to acetyl-CoA and CO(2), and thereby links the glycolytic pathway to the tricarboxylic cycle. The polypeptide is Pyruvate dehydrogenase E1 component subunit beta, mitochondrial (Pdhb) (Rattus norvegicus (Rat)).